A 118-amino-acid chain; its full sequence is uncharacterized protein (118 aa).

This is an uncharacterized protein from Clostridium perfringens.